The primary structure comprises 409 residues: Tyrosine--tRNA ligase (409 aa).

Tyr-39 serves as a coordination point for L-tyrosine. Residues 44–53 carry the 'HIGH' region motif; that stretch reads PTAASLHVGS. 2 residues coordinate L-tyrosine: Tyr-176 and Gln-180. The short motif at 236 to 240 is the 'KMSKS' region element; it reads KMGKT. Residue Lys-239 participates in ATP binding. One can recognise an S4 RNA-binding domain in the interval 346 to 408; it reads ISLVDALVGL…GKKAHGVIQA (63 aa).

It belongs to the class-I aminoacyl-tRNA synthetase family. TyrS type 1 subfamily. As to quaternary structure, homodimer.

The protein localises to the cytoplasm. The catalysed reaction is tRNA(Tyr) + L-tyrosine + ATP = L-tyrosyl-tRNA(Tyr) + AMP + diphosphate + H(+). In terms of biological role, catalyzes the attachment of tyrosine to tRNA(Tyr) in a two-step reaction: tyrosine is first activated by ATP to form Tyr-AMP and then transferred to the acceptor end of tRNA(Tyr). The sequence is that of Tyrosine--tRNA ligase from Zymomonas mobilis subsp. mobilis (strain ATCC 31821 / ZM4 / CP4).